The chain runs to 480 residues: Adenylosuccinate lyase (480 aa).

Positions 14, 15, 79, 80, and 81 each coordinate AMP. His-80 provides a ligand contact to fumarate. His-153 serves as the catalytic Proton donor/acceptor. Gln-236 lines the AMP pocket. Gln-236 provides a ligand contact to fumarate. Position 236 (Gln-236) interacts with N(6)-(1,2-dicarboxyethyl)-AMP. The active-site Proton donor/acceptor is Ser-284. Positions 285, 290, and 292 each coordinate fumarate. N(6)-(1,2-dicarboxyethyl)-AMP contacts are provided by Ser-285, Lys-290, and Asn-292. Arg-298 lines the AMP pocket. Residues Arg-324, Ser-329, and Arg-333 each coordinate N(6)-(1,2-dicarboxyethyl)-AMP. 2 residues coordinate AMP: Ser-329 and Arg-333.

This sequence belongs to the lyase 1 family. Adenylosuccinate lyase subfamily. As to quaternary structure, homotetramer.

The enzyme catalyses N(6)-(1,2-dicarboxyethyl)-AMP = fumarate + AMP. Its pathway is purine metabolism; AMP biosynthesis via salvage pathway. Functionally, catalyzes conversion of succinyladenosine monophosphate (SAMP) to AMP and fumarate on the purine salvage pathway. In Schistosoma mansoni (Blood fluke), this protein is Adenylosuccinate lyase.